The chain runs to 266 residues: UPF0328 protein ECU03_0130 (266 aa).

It belongs to the UPF0328 family.

The chain is UPF0328 protein ECU03_0130 from Encephalitozoon cuniculi (strain GB-M1) (Microsporidian parasite).